The chain runs to 201 residues: Retinol binding protein 4 (201 aa).

Residues Met-1–Ala-18 form the signal peptide. Disulfide bonds link Cys-22–Cys-178, Cys-88–Cys-192, and Cys-138–Cys-147. Residue Gln-116 coordinates substrate. Arg-139 is subject to Omega-N-methylarginine.

This sequence belongs to the calycin superfamily. Lipocalin family. Interacts with TTR. Interaction with TTR prevents its loss by filtration through the kidney glomeruli. Interacts with STRA6. As to expression, highly expressed in liver. Also expressed in adipose tissue. Expressed by endometrium from days 16-25 and by unattached chorioallantois from days 30-36 during pregnancy.

It localises to the secreted. Its function is as follows. Retinol-binding protein that mediates retinol transport in blood plasma. Delivers retinol from the liver stores to the peripheral tissues. Transfers the bound all-trans retinol to STRA6, that then facilitates retinol transport across the cell membrane. The chain is Retinol binding protein 4 from Felis catus (Cat).